We begin with the raw amino-acid sequence, 359 residues long: 4-galactosyl-N-acetylglucosaminide 3-alpha-L-fucosyltransferase FUT6 (359 aa).

The Cytoplasmic segment spans residues 1–14 (MDPLGPAKTQWSWR). A helical; Signal-anchor for type II membrane protein transmembrane segment spans residues 15 to 34 (CCLTALLFQLLVAVCFFSYL). Over 35-359 (RVSRDDPTVY…QTRSIAAWFT (325 aa)) the chain is Lumenal. Residues 73 to 112 (KPIALPRCSEMVPGTADCNITADRKVYPQADAVIVHHREV) form a determines site-specific fucosylation region. N-linked (GlcNAc...) asparagine glycosylation is found at asparagine 91, asparagine 153, and asparagine 184.

The protein belongs to the glycosyltransferase 10 family. As to quaternary structure, homodimer and monomer. Monomer (secreted form). Post-translationally, N-glycosylated. In terms of processing, proteolytic cleavage releases a secreted glycoform of 43 kDa.

It localises to the golgi apparatus. It is found in the golgi stack membrane. The protein resides in the secreted. The enzyme catalyses a beta-D-galactosyl-(1-&gt;4)-N-acetyl-beta-D-glucosaminyl derivative + GDP-beta-L-fucose = a beta-D-galactosyl-(1-&gt;4)-[alpha-L-fucosyl-(1-&gt;3)]-N-acetyl-beta-D-glucosaminyl derivative + GDP + H(+). The catalysed reaction is an N-acetyl-alpha-neuraminyl-(2-&gt;3)-beta-D-galactosyl-(1-&gt;4)-N-acetyl-beta-D-glucosaminyl derivative + GDP-beta-L-fucose = an alpha-Neu5Ac-(2-&gt;3)-beta-D-Gal-(1-&gt;4)-[alpha-L-Fuc-(1-&gt;3)]-beta-D-GlcNAc derivative + GDP + H(+). It catalyses the reaction an alpha-Neu5Ac-(2-&gt;3)-beta-D-Gal-(1-&gt;4)-beta-D-GlcNAc-(1-&gt;3)-beta-D-Gal-(1-&gt;4)-[alpha-L-Fuc-(1-&gt;3)]-beta-D-GlcNAc derivative + GDP-beta-L-fucose = an alpha-Neu5Ac-(2-&gt;3)-beta-D-Gal-(1-&gt;4)-[alpha-L-Fuc-(1-&gt;3)]-beta-D-GlcNAc-(1-&gt;3)-beta-D-Gal-(1-&gt;4)-[alpha-L-Fuc-(1-&gt;3)]-beta-D-GlcNAc derivative + GDP + H(+). It carries out the reaction a neolactoside nLc6Cer + GDP-beta-L-fucose = beta-D-Gal-(1-&gt;4)-[alpha-L-Fuc-(1-&gt;3)]-beta-D-GlcNAc-(1-&gt;3)-beta-D-Gal-(1-&gt;4)-beta-D-GlcNAc-(1-&gt;3)-beta-D-Gal-(1-&gt;4)-beta-D-Glc-(1&lt;-&gt;1')-Cer + GDP + H(+). The enzyme catalyses a neolactoside nLc6Cer + GDP-beta-L-fucose = beta-D-galactosyl-(1-&gt;4)-N-acetyl-beta-D-glucosaminyl-(1-&gt;3)-beta-D-galactosyl-(1-&gt;4)-[alpha-L-fucosyl-(1-&gt;3)]-N-acetyl-beta-D-glucosaminyl-(1-&gt;3)-beta-D-galactosyl-(1-&gt;4)-beta-D-glucosyl-(1&lt;-&gt;1')-ceramide + GDP + H(+). The catalysed reaction is a neolactoside VI(3)-alpha-NeuNAc-nLc6Cer + GDP-beta-L-fucose = a neolactoside VI(3)-alpha-NeuAc,V(3)-alphaFuc-nLc6Cer + GDP + H(+). It catalyses the reaction beta-D-galactosyl-(1-&gt;4)-N-acetyl-D-glucosamine + GDP-beta-L-fucose = beta-D-galactosyl-(1-&gt;4)-[alpha-L-fucosyl-(1-&gt;3)]-N-acetyl-D-glucosamine + GDP + H(+). It carries out the reaction N-acetyl-alpha-neuraminosyl-(2-&gt;3)-beta-D-galactosyl-(1-&gt;4)-N-acetyl-beta-D-glucosamine + GDP-beta-L-fucose = N-acetyl-alpha-neuraminosyl-(2-&gt;3)-beta-D-galactosyl-(1-&gt;4)-[alpha-L-fucosyl-(1-&gt;3)]-N-acetyl-beta-D-glucosamine + GDP + H(+). The enzyme catalyses lactose + GDP-beta-L-fucose = beta-D-galactosyl-(1-&gt;4)-[alpha-L-fucosyl-(1-&gt;3)]-D-glucose + GDP + H(+). The catalysed reaction is alpha-L-Fuc-(1-&gt;2)-beta-D-Gal-(1-&gt;4)-D-Glc + GDP-beta-L-fucose = alpha-L-Fuc-(1-&gt;2)-beta-D-Gal-(1-&gt;4)-[alpha-L-Fuc-(1-&gt;3)]-D-Glc + GDP + H(+). It catalyses the reaction a beta-D-galactosyl-(1-&gt;4)-N-acetyl-beta-D-6-sulfooxy-glucosaminyl derivative + GDP-beta-L-fucose = a beta-D-galactosyl-(1-&gt;4)-[alpha-L-fucosyl-(1-&gt;3)]-N-acetyl-beta-D-6-sulfooxy-glucosaminyl derivative + GDP + H(+). Its pathway is protein modification; protein glycosylation. Catalyzes the transfer of L-fucose, from a guanosine diphosphate-beta-L-fucose, to the N-acetyl glucosamine (GlcNAc) of a distal alpha2,3 sialylated lactosamine unit of a glycoprotein- or glycolipid-linked sialopolylactosamines chain or of a distal or internal lactosamine unit of a neutral glycoprotein- or glycolipid-linked polylactosamines chain through an alpha-1,3 glycosidic linkage and participates in surface expression of the sialyl Lewis X (sLe(x)), Lewis X (Le(x)) and non sialylated VIM2 determinants. Moreover transfers fucose to H-type 2 (Fucalpha1-2Galbeta1-4GlcNAc) chain acceptor substrates and participates in difucosylated sialyl Lewis x determinants. Also fucosylates a polylactosamine substrate having a 6 sulfate modification at the GlcNAc moiety and gives rise to sialyl and non-sialyl 6-sulfo lewis X. Does not have activity towards type 1 ((Galbeta1-3GlcNAc)) and H-type 1 chain (Fucalpha1-2Galbeta1-3GlcNAc) acceptors substrates. The chain is 4-galactosyl-N-acetylglucosaminide 3-alpha-L-fucosyltransferase FUT6 from Pongo pygmaeus (Bornean orangutan).